Here is a 151-residue protein sequence, read N- to C-terminus: Putative pre-16S rRNA nuclease (151 aa).

It belongs to the YqgF nuclease family.

The protein resides in the cytoplasm. Its function is as follows. Could be a nuclease involved in processing of the 5'-end of pre-16S rRNA. This Aster yellows witches'-broom phytoplasma (strain AYWB) protein is Putative pre-16S rRNA nuclease.